The primary structure comprises 21 residues: Dahlein-5.6 (21 aa).

As to expression, expressed by the skin dorsal glands.

The protein resides in the secreted. Functionally, has no antimicrobial activity. Strongly inhibits the formation of NO by neuronal nitric oxide synthase at micromolar concentrations. The chain is Dahlein-5.6 from Ranoidea dahlii (Dahl's aquatic frog).